A 533-amino-acid polypeptide reads, in one-letter code: D-3-phosphoglycerate dehydrogenase (533 aa).

N-acetylalanine is present on A2. The residue at position 14 (S14) is a Phosphoserine. N6-acetyllysine; alternate is present on K21. Residue K21 forms a Glycyl lysine isopeptide (Lys-Gly) (interchain with G-Cter in SUMO1); alternate linkage. A Glycyl lysine isopeptide (Lys-Gly) (interchain with G-Cter in SUMO2); alternate cross-link involves residue K21. Residue K58 is modified to N6-acetyllysine. Residues T78, 155-156 (RI), D175, T207, 234-236 (CAR), and D260 contribute to the NAD(+) site. Residue T78 is modified to Phosphothreonine. Residue R236 is part of the active site. E265 is a catalytic residue. H283 acts as the Proton donor in catalysis. 283–286 (HLGA) is a binding site for NAD(+).

This sequence belongs to the D-isomer specific 2-hydroxyacid dehydrogenase family. Homotetramer.

The enzyme catalyses (2R)-3-phosphoglycerate + NAD(+) = 3-phosphooxypyruvate + NADH + H(+). The catalysed reaction is (R)-2-hydroxyglutarate + NAD(+) = 2-oxoglutarate + NADH + H(+). It catalyses the reaction (S)-malate + NAD(+) = oxaloacetate + NADH + H(+). It functions in the pathway amino-acid biosynthesis; L-serine biosynthesis; L-serine from 3-phospho-D-glycerate: step 1/3. Its function is as follows. Catalyzes the reversible oxidation of 3-phospho-D-glycerate to 3-phosphonooxypyruvate, the first step of the phosphorylated L-serine biosynthesis pathway. Also catalyzes the reversible oxidation of 2-hydroxyglutarate to 2-oxoglutarate and the reversible oxidation of (S)-malate to oxaloacetate. In Pan troglodytes (Chimpanzee), this protein is D-3-phosphoglycerate dehydrogenase (PHGDH).